The chain runs to 143 residues: Transcriptional regulator MraZ (143 aa).

SpoVT-AbrB domains lie at 5-47 and 76-119; these read EYQH…PKEE and AGEC…SRER.

Belongs to the MraZ family. As to quaternary structure, forms oligomers.

Its subcellular location is the cytoplasm. The protein resides in the nucleoid. The protein is Transcriptional regulator MraZ of Heliobacterium modesticaldum (strain ATCC 51547 / Ice1).